Reading from the N-terminus, the 159-residue chain is Protein-export protein SecB (159 aa).

The protein belongs to the SecB family. Homotetramer, a dimer of dimers. One homotetramer interacts with 1 SecA dimer.

The protein localises to the cytoplasm. Functionally, one of the proteins required for the normal export of preproteins out of the cell cytoplasm. It is a molecular chaperone that binds to a subset of precursor proteins, maintaining them in a translocation-competent state. It also specifically binds to its receptor SecA. The sequence is that of Protein-export protein SecB from Pseudomonas fluorescens (strain SBW25).